We begin with the raw amino-acid sequence, 288 residues long: tRNA dimethylallyltransferase (288 aa).

17 to 24 (GPTASGKT) lines the ATP pocket. Position 19-24 (19-24 (TASGKT)) interacts with substrate.

Belongs to the IPP transferase family. In terms of assembly, monomer. It depends on Mg(2+) as a cofactor.

The catalysed reaction is adenosine(37) in tRNA + dimethylallyl diphosphate = N(6)-dimethylallyladenosine(37) in tRNA + diphosphate. Its function is as follows. Catalyzes the transfer of a dimethylallyl group onto the adenine at position 37 in tRNAs that read codons beginning with uridine, leading to the formation of N6-(dimethylallyl)adenosine (i(6)A). This is tRNA dimethylallyltransferase from Jannaschia sp. (strain CCS1).